The chain runs to 319 residues: Molybdenum cofactor biosynthesis bifunctional protein (319 aa).

Residues 1–145 (MIDVGDKAVT…GKSGHWQRPA (145 aa)) form a molybdenum cofactor biosynthesis protein C region. Substrate contacts are provided by residues 61–63 (LCH) and 99–100 (ME). The active site involves D114. The segment at 146–319 (IAPDVAPTGA…KGADHGTVKG (174 aa)) is molybdenum cofactor biosynthesis protein B.

The protein in the N-terminal section; belongs to the MoaC family. In the C-terminal section; belongs to the MoaB/Mog family.

The enzyme catalyses (8S)-3',8-cyclo-7,8-dihydroguanosine 5'-triphosphate = cyclic pyranopterin phosphate + diphosphate. It functions in the pathway cofactor biosynthesis; molybdopterin biosynthesis. In terms of biological role, catalyzes the conversion of (8S)-3',8-cyclo-7,8-dihydroguanosine 5'-triphosphate to cyclic pyranopterin monophosphate (cPMP). The protein is Molybdenum cofactor biosynthesis bifunctional protein (moaCB) of Synechococcus elongatus (strain ATCC 33912 / PCC 7942 / FACHB-805) (Anacystis nidulans R2).